The chain runs to 278 residues: Urease accessory protein UreD (278 aa).

This sequence belongs to the UreD family. As to quaternary structure, ureD, UreF and UreG form a complex that acts as a GTP-hydrolysis-dependent molecular chaperone, activating the urease apoprotein by helping to assemble the nickel containing metallocenter of UreC. The UreE protein probably delivers the nickel.

The protein localises to the cytoplasm. In terms of biological role, required for maturation of urease via the functional incorporation of the urease nickel metallocenter. The polypeptide is Urease accessory protein UreD (Staphylococcus epidermidis (strain ATCC 12228 / FDA PCI 1200)).